Here is a 486-residue protein sequence, read N- to C-terminus: Protein nucleotidyltransferase YdiU (486 aa).

The ATP site is built by glycine 90, glycine 92, arginine 93, lysine 113, aspartate 125, glycine 126, arginine 176, and arginine 183. The active-site Proton acceptor is aspartate 252. Mg(2+)-binding residues include asparagine 253 and aspartate 262. Aspartate 262 provides a ligand contact to ATP.

It belongs to the SELO family. Mg(2+) is required as a cofactor. Requires Mn(2+) as cofactor.

It carries out the reaction L-seryl-[protein] + ATP = 3-O-(5'-adenylyl)-L-seryl-[protein] + diphosphate. It catalyses the reaction L-threonyl-[protein] + ATP = 3-O-(5'-adenylyl)-L-threonyl-[protein] + diphosphate. The enzyme catalyses L-tyrosyl-[protein] + ATP = O-(5'-adenylyl)-L-tyrosyl-[protein] + diphosphate. The catalysed reaction is L-histidyl-[protein] + UTP = N(tele)-(5'-uridylyl)-L-histidyl-[protein] + diphosphate. It carries out the reaction L-seryl-[protein] + UTP = O-(5'-uridylyl)-L-seryl-[protein] + diphosphate. It catalyses the reaction L-tyrosyl-[protein] + UTP = O-(5'-uridylyl)-L-tyrosyl-[protein] + diphosphate. Nucleotidyltransferase involved in the post-translational modification of proteins. It can catalyze the addition of adenosine monophosphate (AMP) or uridine monophosphate (UMP) to a protein, resulting in modifications known as AMPylation and UMPylation. This is Protein nucleotidyltransferase YdiU from Pseudomonas putida (strain W619).